The sequence spans 913 residues: Pentatricopeptide repeat-containing protein At1g10270 (913 aa).

The disordered stretch occupies residues 34–138; it reads SLSPANEDPE…PNAPRLPDST (105 aa). The segment covering 64–73 has biased composition (polar residues); it reads DPSQFQIPQN. Residues 74–84 show a composition bias toward pro residues; sequence HTPPIPYPPIP. The Nuclear localization signal motif lies at 99-108; it reads ERRRRKRRLR. Residues 108–130 show a composition bias toward basic and acidic residues; that stretch reads RIEPPLHALRRDPSAPPPKRDPN. Positions 134 to 167 are leucine-zipper; that stretch reads LPDSTSALVGQRLNLHNRVQSLIRASDLDAASKL. PPR repeat units lie at residues 179–214, 215–250, 251–285, 286–316, 321–355, 356–390, 396–426, 435–469, 470–504, 505–539, and 540–574; these read TVFT…NIVP, NVVS…PFAP, SSVT…GQAA, DSTV…LKSK, DGIV…KFRM, HPPT…HAPP, NSDT…VGSK, DYLG…SLPA, DAPS…NLRV, VADF…EPKP, and DPSI…NVGV. Residues 607–913 are disordered; sequence RNAGQSGNTP…QEKKVVELRN (307 aa). A compositionally biased stretch (polar residues) spans 639 to 649; sequence WTSQGVVHSNS. Low complexity-rich tracts occupy residues 650–666 and 673–690; these read GWAN…AYKA and SWSN…SNQT. The tract at residues 674–858 is 14 X 11 AA approximate tandem repeats of W-x(2)-Q-x(4)-Q-x(2); that stretch reads WSNTSDNQQQ…TAQQQWSNQT (185 aa). Positions 691–700 are enriched in polar residues; it reads AGQQPPSWSR. Low complexity predominate over residues 706-727; sequence QQQQSWSQQSGWSSPSGHQQSW. Residues 728 to 761 show a composition bias toward polar residues; that stretch reads TNQTAGQQQPWANQTPGQQQQWANQTPGQQQQLA. Low complexity predominate over residues 762 to 791; the sequence is NQTPGQQQQWANQTPGQQQQWANQNNGHQQ. Over residues 792-814 the composition is skewed to polar residues; it reads PWANQNTGHQQSWANQTPSQQQP. Residues 815-845 show a composition bias toward low complexity; the sequence is WANQTTGQQQGWGNQTTGQQQQWANQTAGQQ. Composition is skewed to polar residues over residues 846–867 and 875–894; these read SGWT…SQWL and ANQT…QQEP. Over residues 899-913 the composition is skewed to basic and acidic residues; that stretch reads ECQETQEKKVVELRN.

This sequence belongs to the PPR family. P subfamily. In terms of assembly, interacts with RPB36B through its WQQ domain. As to expression, ubiquitous but preferentially expressed in gametophytes and young embryos.

Its subcellular location is the nucleus. Its function is as follows. May function as a transcriptional regulator essential for early embryogenesis. This Arabidopsis thaliana (Mouse-ear cress) protein is Pentatricopeptide repeat-containing protein At1g10270 (GRP23).